Consider the following 253-residue polypeptide: Ribonuclease HII (253 aa).

Residues 70–253 (NLIAGIDEVG…KSFEPIKSML (184 aa)) enclose the RNase H type-2 domain. The a divalent metal cation site is built by Asp-76, Glu-77, and Asp-168.

Belongs to the RNase HII family. Mn(2+) serves as cofactor. It depends on Mg(2+) as a cofactor.

Its subcellular location is the cytoplasm. It carries out the reaction Endonucleolytic cleavage to 5'-phosphomonoester.. Its function is as follows. Endonuclease that specifically degrades the RNA of RNA-DNA hybrids. In Streptococcus agalactiae serotype Ia (strain ATCC 27591 / A909 / CDC SS700), this protein is Ribonuclease HII.